Consider the following 224-residue polypeptide: uncharacterized protein (224 aa).

The Matrin-type zinc finger occupies 11–42; it reads YYCKYCQIFVKDTPFARRSHEQTYKHQDAIKK. A compositionally biased stretch (low complexity) spans 67–80; sequence ATATTASAVSSELA. Disordered regions lie at residues 67–158 and 172–224; these read ATAT…RNRE and VKPK…YDQS. Basic residues predominate over residues 87 to 98; that stretch reads KEHPKLRPSKKK. Low complexity predominate over residues 108–122; the sequence is TSSTETDTISTTHTS. The segment covering 175 to 199 has biased composition (basic and acidic residues); the sequence is KNLDKVPKLAENEGNKSLESKESNE. Positions 203–216 are enriched in basic residues; that stretch reads VFKKKKSGKLRTKS.

The protein localises to the nucleus. It is found in the nucleolus. This is an uncharacterized protein from Schizosaccharomyces pombe (strain 972 / ATCC 24843) (Fission yeast).